We begin with the raw amino-acid sequence, 96 residues long: RNA-binding protein Hfq (96 aa).

The region spanning 9–68 (DPYLNALRRERIPVSIYLVNGIKLQGQIESFDQFVILLKNTVNQMVYKHAISTVVPARSV) is the Sm domain. Residues 65 to 96 (ARSVSHHNNPQQQQQHSQQTESAAPAAEPQAE) form a disordered region. Positions 70 to 96 (HHNNPQQQQQHSQQTESAAPAAEPQAE) are enriched in low complexity.

It belongs to the Hfq family. Homohexamer.

Functionally, RNA chaperone that binds small regulatory RNA (sRNAs) and mRNAs to facilitate mRNA translational regulation in response to envelope stress, environmental stress and changes in metabolite concentrations. Also binds with high specificity to tRNAs. The protein is RNA-binding protein Hfq of Mannheimia succiniciproducens (strain KCTC 0769BP / MBEL55E).